The chain runs to 263 residues: Ribosomal RNA large subunit methyltransferase E (263 aa).

The disordered stretch occupies residues 1 to 34 (MSSAEGPKSGGGSKGSKSEASSRVRGSAPTGSRD). Residues G102, W104, D126, D142, and D166 each contribute to the S-adenosyl-L-methionine site. K206 functions as the Proton acceptor in the catalytic mechanism.

This sequence belongs to the class I-like SAM-binding methyltransferase superfamily. RNA methyltransferase RlmE family.

It localises to the cytoplasm. It catalyses the reaction uridine(2552) in 23S rRNA + S-adenosyl-L-methionine = 2'-O-methyluridine(2552) in 23S rRNA + S-adenosyl-L-homocysteine + H(+). Functionally, specifically methylates the uridine in position 2552 of 23S rRNA at the 2'-O position of the ribose in the fully assembled 50S ribosomal subunit. This Rhodospirillum rubrum (strain ATCC 11170 / ATH 1.1.1 / DSM 467 / LMG 4362 / NCIMB 8255 / S1) protein is Ribosomal RNA large subunit methyltransferase E.